The chain runs to 486 residues: MTTIVDSNLPVARPSWDHSRLESRIVHLGCGAFHRAHQALYTHHLLESTDSDWGICEVNLMPGNDRVLIENLKKQQLLYTVAEKGAESTELKIIGSMKEALHPEIDGCEGILNAMARPQTAIVSLTVTEKGYCADAASGQLDLNNPLIKHDLENPTAPKSAIGYIVEALRLRREKGLKAFTVMSCDNVRENGHVAKVAVLGLAQARDPQLAAWIEENVTFPCTMVDRIVPAATPETLQEIADQLGVYDPCAIACEPFRQWVIEDNFVNGRPDWDKVGAQFVADVVPFEMMKLRMLNGSHSFLAYLGYLGGYETIADTVTNPAYRKAAFALMMQEQAPTLSMPEGTDLNAYATLLIERFSNPSLRHRTWQIAMDGSQKLPQRLLDPVRLHLQNGGSWRHLALGVAGWMRYTQGVDEQGNAIDVVDPMLAEFQKINAQYQGADRVKALLGLSGIFADDLPQNADFVGAVTAAYQQLCERGARECVAAL.

Residue 25 to 36 (IVHLGCGAFHRA) coordinates NAD(+).

It belongs to the mannitol dehydrogenase family. UxuB subfamily.

The catalysed reaction is D-mannonate + NAD(+) = keto-D-fructuronate + NADH + H(+). The protein operates within carbohydrate metabolism; pentose and glucuronate interconversion. The protein is D-mannonate oxidoreductase (uxuB) of Escherichia coli (strain K12).